The following is an 826-amino-acid chain: MSISRREFLKANAAVAAATAVGATLPVKIVEAAEQKDNIKWDKAPCRFCGVGCSVLVGTDNGKVVATKGDPESPVNKGLNCIKGYFLSKIMYGKDRLTTPLLRMKDGQYDKEGEFTPISWDSAFDIMADKWKDTLKTKGPTAVGMFGSGQWTVWEGYAASKLHKAGFLTNNIDPNARHCMASAVGGFMRTFGIDEPMGCYDDLEAADQFVLWGANMAEMHPILWARLSDRRLSSPTSRVHVLSTYENRSFDLADNAMVFRPQSDLVILNYVANYIIQNDAVNKDFVNKHTKFALGTTDIGYGLRPDHPLEKKAKNPGNGKSKPISFDEYAKFVSSYTLEYAAEMSGVEPEKLELMAKAYADPNVKMMSLWTMGINQHTRGVWANNMLYNIHLLTGKIATPGNSPFSLTGQPSACGTAREVGTFAHRLPADMVVANPKHREITEKLWQVPAGTIPPKPGFHAVLQSRMLKDGKLNCYWTMCTNNMQAGPNINDEMYPGFRNPENFIVVSDPYPTVTAMAADLILPTAMWVEKEGAYGNAERRTHMWHQQVKAPEGAKSDLWQLMEFSKRFKVSEVWPAELIAKQPELADKTLFDVLYANGVVDKFPSSECKGQYNDEADAFGFYVQKGLFEEYAQFGRGHAHDLADFDTYHETRGLRWPVVDGKETLRRFSKGDPYVKGDKEFDFYGKPDGKAVIFALPFEPAAEEPNEEYDIWLSTGRVLEHWHTGSMTARVPELYRAYPDAQIFMHPEDAKARGLKRGDEVIVASPRGEVKTRVETKGRNKPPRGVAFMPFFDARQLVNKLILDATDPLSKETDFKKCPVKVMKA.

The segment at residues 1 to 32 is a signal peptide (tat-type signal); it reads MSISRREFLKANAAVAAATAVGATLPVKIVEA. The region spanning 39–95 is the 4Fe-4S Mo/W bis-MGD-type domain; it reads IKWDKAPCRFCGVGCSVLVGTDNGKVVATKGDPESPVNKGLNCIKGYFLSKIMYGKD. 4 residues coordinate [4Fe-4S] cluster: Cys46, Cys49, Cys53, and Cys81. Residues Lys83, Gln150, Asn175, Cys179, 212-219, 262-264, Met372, Gln376, Asn482, 508-509, Lys531, Asp558, and 716-725 each bind Mo-bis(molybdopterin guanine dinucleotide); these read WGANMAEM, QSD, SD, and TGRVLEHWHT. Position 792 (Phe792) interacts with substrate. Mo-bis(molybdopterin guanine dinucleotide)-binding residues include Asn800 and Lys817.

It belongs to the prokaryotic molybdopterin-containing oxidoreductase family. NasA/NapA/NarB subfamily. In terms of assembly, component of the periplasmic nitrate reductase NapAB complex composed of NapA and NapB. The cofactor is [4Fe-4S] cluster. It depends on Mo-bis(molybdopterin guanine dinucleotide) as a cofactor. Predicted to be exported by the Tat system. The position of the signal peptide cleavage has not been experimentally proven.

The protein localises to the periplasm. The catalysed reaction is 2 Fe(II)-[cytochrome] + nitrate + 2 H(+) = 2 Fe(III)-[cytochrome] + nitrite + H2O. Functionally, catalytic subunit of the periplasmic nitrate reductase complex NapAB. Receives electrons from NapB and catalyzes the reduction of nitrate to nitrite. The sequence is that of Periplasmic nitrate reductase from Shewanella halifaxensis (strain HAW-EB4).